We begin with the raw amino-acid sequence, 501 residues long: Lysine--tRNA ligase (501 aa).

Residues Asp411 and Glu418 each coordinate Mg(2+).

Belongs to the class-II aminoacyl-tRNA synthetase family. In terms of assembly, homodimer. It depends on Mg(2+) as a cofactor.

The protein resides in the cytoplasm. The enzyme catalyses tRNA(Lys) + L-lysine + ATP = L-lysyl-tRNA(Lys) + AMP + diphosphate. The protein is Lysine--tRNA ligase of Mycolicibacterium gilvum (strain PYR-GCK) (Mycobacterium gilvum (strain PYR-GCK)).